Reading from the N-terminus, the 554-residue chain is Formate--tetrahydrofolate ligase (554 aa).

63–70 serves as a coordination point for ATP; the sequence is TPAGEGKT.

Belongs to the formate--tetrahydrofolate ligase family.

The enzyme catalyses (6S)-5,6,7,8-tetrahydrofolate + formate + ATP = (6R)-10-formyltetrahydrofolate + ADP + phosphate. It functions in the pathway one-carbon metabolism; tetrahydrofolate interconversion. The chain is Formate--tetrahydrofolate ligase from Halothermothrix orenii (strain H 168 / OCM 544 / DSM 9562).